The chain runs to 267 residues: MQEFTNPFPIGSSSLIHCMTNEISCEMLANGILALGCKPVMADDPREVLDFTKQSQALFINLGHLSAEKEKAIRIAASYAAQVCLPMVVDAVGVTASSIRKSLVRDLLDYRPTVLKGNMSEIRSLVGLKHHGVGVDASAKDQETEDLLQVLKDWCQTYHGMSFLVTGPKDLVVSKNQVAVLGNGCAELDWITGTGDLVGALTAVFLSQGKTGFEASCLAVSYLNIAAEKIVVQGMGLEEFRYQVLNQLSLLRRDENWLDTIKGEVYE.

Met-41 contributes to the substrate binding site. 2 residues coordinate ATP: Lys-116 and Thr-166. A substrate-binding site is contributed by Gly-193.

It belongs to the Thz kinase family. It depends on Mg(2+) as a cofactor.

The catalysed reaction is 5-(2-hydroxyethyl)-4-methylthiazole + ATP = 4-methyl-5-(2-phosphooxyethyl)-thiazole + ADP + H(+). Its pathway is cofactor biosynthesis; thiamine diphosphate biosynthesis; 4-methyl-5-(2-phosphoethyl)-thiazole from 5-(2-hydroxyethyl)-4-methylthiazole: step 1/1. Its function is as follows. Catalyzes the phosphorylation of the hydroxyl group of 4-methyl-5-beta-hydroxyethylthiazole (THZ). In Streptococcus pneumoniae (strain JJA), this protein is Hydroxyethylthiazole kinase 2.